The sequence spans 496 residues: Zinc finger protein PLAGL2 (496 aa).

6 consecutive C2H2-type zinc fingers follow at residues 68 to 92, 98 to 120, 127 to 149, 156 to 178, 191 to 213, and 219 to 242; these read YSCP…MATH, HQCM…LQTH, LHCS…LAMH, LSCK…LKAH, HPCD…LVVH, and FLCQ…KKSH.

It belongs to the krueppel C2H2-type zinc-finger protein family.

It is found in the nucleus. Functionally, shows weak transcriptional activatory activity. This is Zinc finger protein PLAGL2 (PLAGL2) from Homo sapiens (Human).